A 200-amino-acid chain; its full sequence is Superoxide dismutase [Mn] 2 (200 aa).

Positions 28, 76, 158, and 162 each coordinate Mn(2+).

This sequence belongs to the iron/manganese superoxide dismutase family. Mn(2+) is required as a cofactor.

The enzyme catalyses 2 superoxide + 2 H(+) = H2O2 + O2. Destroys superoxide anion radicals which are normally produced within the cells and which are toxic to biological systems. The protein is Superoxide dismutase [Mn] 2 (sod2) of Halobacterium salinarum (strain ATCC 700922 / JCM 11081 / NRC-1) (Halobacterium halobium).